A 483-amino-acid polypeptide reads, in one-letter code: Aspartyl/glutamyl-tRNA(Asn/Gln) amidotransferase subunit B (483 aa).

The protein belongs to the GatB/GatE family. GatB subfamily. As to quaternary structure, heterotrimer of A, B and C subunits.

The catalysed reaction is L-glutamyl-tRNA(Gln) + L-glutamine + ATP + H2O = L-glutaminyl-tRNA(Gln) + L-glutamate + ADP + phosphate + H(+). The enzyme catalyses L-aspartyl-tRNA(Asn) + L-glutamine + ATP + H2O = L-asparaginyl-tRNA(Asn) + L-glutamate + ADP + phosphate + 2 H(+). Functionally, allows the formation of correctly charged Asn-tRNA(Asn) or Gln-tRNA(Gln) through the transamidation of misacylated Asp-tRNA(Asn) or Glu-tRNA(Gln) in organisms which lack either or both of asparaginyl-tRNA or glutaminyl-tRNA synthetases. The reaction takes place in the presence of glutamine and ATP through an activated phospho-Asp-tRNA(Asn) or phospho-Glu-tRNA(Gln). In Anaeromyxobacter sp. (strain Fw109-5), this protein is Aspartyl/glutamyl-tRNA(Asn/Gln) amidotransferase subunit B.